A 255-amino-acid chain; its full sequence is Antigen LPMC-61 (255 aa).

12 tandem repeats follow at residues 18–48, 49–57, 58–65, 66–78, 79–90, 91–103, 104–140, 141–152, 153–164, 165–172, 173–192, and 193–210. Positions 18 to 90 are disordered; the sequence is WPERQQQQQP…QQQPQMQQEQ (73 aa). A 12 X approximate tandem repeats, Gln-rich region spans residues 18 to 210; sequence WPERQQQQQP…QQQQQQQQQQ (193 aa). Residues 149-210 are compositionally biased toward low complexity; that stretch reads QQQQWPEQPE…QQQQQQQQQQ (62 aa). Positions 149-224 are disordered; sequence QQQQWPEQPE…DGVGIVVPYL (76 aa).

As to quaternary structure, may be covalently linked by disulfide bonds to other polypeptides to form the 80 kDa antigen.

Unknown. The Gln-rich tandem repeats may be important for an unknown aspect of the parasitic life cycle. May be an important immunogen. In Eimeria tenella (Coccidian parasite), this protein is Antigen LPMC-61.